We begin with the raw amino-acid sequence, 290 residues long: Protease HtpX homolog (290 aa).

The next 2 helical transmembrane spans lie at Ile4–Leu24 and Pro39–Ile59. His144 serves as a coordination point for Zn(2+). The active site involves Glu145. His148 lines the Zn(2+) pocket. Helical transmembrane passes span Leu159 to Val179 and Ile197 to Phe217. Glu222 contributes to the Zn(2+) binding site.

This sequence belongs to the peptidase M48B family. The cofactor is Zn(2+).

The protein localises to the cell inner membrane. The chain is Protease HtpX homolog from Janthinobacterium sp. (strain Marseille) (Minibacterium massiliensis).